Reading from the N-terminus, the 107-residue chain is UPF0145 protein Ent638_1382 (107 aa).

This sequence belongs to the UPF0145 family.

The polypeptide is UPF0145 protein Ent638_1382 (Enterobacter sp. (strain 638)).